Here is a 1012-residue protein sequence, read N- to C-terminus: Ubiquitin-like modifier-activating enzyme 7 (1012 aa).

The stretch at 23–159 is one 1-1 repeat; it reads GSPAMQRIQG…DTRGLVGQLF (137 aa). The segment at 23–575 is 2 approximate repeats; the sequence is GSPAMQRIQG…GTWGSATVFM (553 aa). Ser266 bears the Phosphoserine mark. The 1-2 repeat unit spans residues 423–575; the sequence is GAGFQEKLRR…GTWGSATVFM (153 aa). An ATP-binding site is contributed by 442 to 471; sequence AIGCELLKVFALVGLGAGNSGGLTVVDMDH. Cys599 (glycyl thioester intermediate) is an active-site residue.

Belongs to the ubiquitin-activating E1 family. In terms of assembly, (Microbial infection) Interacts with human cytomegalovirus proteins NEC2/UL50 and UL26; these interactions inhibit ISGylation and cause proteasomal degradation of UBA7. As to quaternary structure, (Microbial infection) Interacts with rotavirus non-structural protein 5 (NSP5); this interaction promotes UBA7 proteasomal degradation. Monomer. Binds and is involved in the conjugation of G1P2/ISG15. ISGylated. Post-translationally, ubiquitinated by RNF170. In terms of tissue distribution, expressed in a variety of normal and tumor cell types, but is reduced in lung cancer cell lines.

Its subcellular location is the cytoplasm. It localises to the nucleus. It participates in protein modification; protein ubiquitination. Functionally, E1-activating enzyme that catalyzes the covalent conjugation of the ubiquitin-like protein product of ISG15 to additional interferon stimulated proteins (ISGs) as well as other cellular proteins such as P53 in a process termed protein ISGylation. Plays an essential role in antiviral immunity together with ISG15 by restricting the replication of many viruses including rabies virus, influenza virus, sindbis virus, rotavirus or human cytomegalovirus. For example, ISG15 modification of influenza A protein NS1 disrupts the association of the NS1 with importin-alpha leading to NS1 nuclear import inhibition. ISGylation of human cytomegalovirs protein UL26 regulates its stability and inhibits its activities to suppress NF-kappa-B signaling. The chain is Ubiquitin-like modifier-activating enzyme 7 from Homo sapiens (Human).